Consider the following 158-residue polypeptide: Phosphopantetheine adenylyltransferase (158 aa).

A substrate-binding site is contributed by T10. Residues 10–11 (TF) and H18 contribute to the ATP site. Substrate is bound by residues K42, L74, and R88. ATP contacts are provided by residues 89-91 (GIR), E99, and 124-130 (WRYLSST).

The protein belongs to the bacterial CoaD family. In terms of assembly, homohexamer. Requires Mg(2+) as cofactor.

The protein localises to the cytoplasm. It catalyses the reaction (R)-4'-phosphopantetheine + ATP + H(+) = 3'-dephospho-CoA + diphosphate. It functions in the pathway cofactor biosynthesis; coenzyme A biosynthesis; CoA from (R)-pantothenate: step 4/5. In terms of biological role, reversibly transfers an adenylyl group from ATP to 4'-phosphopantetheine, yielding dephospho-CoA (dPCoA) and pyrophosphate. In Actinobacillus pleuropneumoniae serotype 5b (strain L20), this protein is Phosphopantetheine adenylyltransferase.